A 522-amino-acid polypeptide reads, in one-letter code: Target of rapamycin complex 2 subunit MAPKAP1 (522 aa).

Ala2 carries the post-translational modification N-acetylalanine. The segment at 2-184 is interaction with MAP3K2; it reads AFLDNPTIIL…KKIDVYLPLH (183 aa). The interaction with NBN stretch occupies residues 2-267; that stretch reads AFLDNPTIIL…GFSTLALVEK (266 aa). Position 86 is a phosphothreonine (Thr86). A phosphoserine mark is found at Ser128, Ser186, Ser315, and Ser356. A CRIM domain is found at 139–267; that stretch reads QSILSVRLEQ…GFSTLALVEK (129 aa). Residues 279–353 form an SIN1-type RBD region; it reads LFVRINAAHG…QSAWEFCLVR (75 aa). Positions 382-487 constitute an SIN1-type PH domain; it reads HYKSFKVSMI…IVLKVNYILE (106 aa). Arg393 lines the a 1,2-diacyl-sn-glycero-3-phospho-(1D-myo-inositol-3,4,5-trisphosphate) pocket. Thr398 carries the phosphothreonine modification. A 1,2-diacyl-sn-glycero-3-phospho-(1D-myo-inositol-3,4,5-trisphosphate)-binding residues include Lys428 and Lys464. Positions 468-522 are interaction with ATF2; the sequence is FESDAATVNEIVLKVNYILESRASTARADYFAQKQRKLNRRTSFSFQKEKKSGQQ. At Ser510 the chain carries Phosphoserine.

Belongs to the SIN1 family. Component of the mechanistic target of rapamycin complex 2 (mTORC2), consisting in two heterotretramers composed of MTOR, MLST8, RICTOR and MAPKAP1/SIN1. The mTORC2 core complex associates with PRR5/PROTOR1 and/or PRR5L/PROTOR2. Contrary to mTORC1, mTORC2 does not bind to and is not sensitive to FKBP12-rapamycin. Interacts with MAP3K2. Interacts with ATF2. Interacts with MAPK8. Interacts with GTP-bound HRAS and KRAS; inhibiting their activity. Interacts with IFNAR2. Post-translationally, phosphorylation at Ser-128 by PKC promotes relocalization to the perinuclear region, where the mTORC2 complex specifically mediates phosphorylation of SGK1. Phosphorylated at Thr-86 by AKT1 or RPS6KB1 in the presence of growth factors; the effect of this phosphorylation is however unclear. According to two studies, phosphorylation at Thr-86 by AKT1 is part of a positive feedback loop that increases mTORC2 activation. According to another study, phosphorylation at Thr-86 and Thr-398 by RPS6KB1 promotes dissociation from the mTORC2 complex, leading to inhibit mTORC2 signaling.

It localises to the cell membrane. It is found in the endoplasmic reticulum membrane. The protein localises to the early endosome membrane. The protein resides in the late endosome membrane. Its subcellular location is the lysosome membrane. It localises to the golgi apparatus membrane. It is found in the mitochondrion outer membrane. The protein localises to the cytoplasm. The protein resides in the perinuclear region. Its subcellular location is the nucleus. Phosphatidylinositol 3,4,5-trisphosphate (PI(3,4,5)P3) promotes MTOR activation by relieving MAPKAP1/SIN1-mediated inhibition of MTOR that takes place in absence of PI(3,4,5)P3. Its function is as follows. Component of the mechanistic target of rapamycin complex 2 (mTORC2), which transduces signals from growth factors to pathways involved in proliferation, cytoskeletal organization, lipogenesis and anabolic output. In response to growth factors, mTORC2 phosphorylates and activates AGC protein kinase family members, including AKT (AKT1, AKT2 and AKT3), PKC (PRKCA, PRKCB and PRKCE) and SGK1. In contrast to mTORC1, mTORC2 is nutrient-insensitive. Within the mTORC2 complex, MAPKAP1/SIN1 acts as a substrate adapter which recognizes and binds AGC protein kinase family members for phosphorylation by MTOR. mTORC2 plays a critical role in AKT1 activation by mediating phosphorylation of different sites depending on the context, such as 'Thr-450', 'Ser-473', 'Ser-477' or 'Thr-479', facilitating the phosphorylation of the activation loop of AKT1 on 'Thr-308' by PDPK1/PDK1 which is a prerequisite for full activation. mTORC2 catalyzes the phosphorylation of SGK1 at 'Ser-422' and of PRKCA on 'Ser-657'. The mTORC2 complex also phosphorylates various proteins involved in insulin signaling, such as FBXW8 and IGF2BP1. mTORC2 acts upstream of Rho GTPases to regulate the actin cytoskeleton, probably by activating one or more Rho-type guanine nucleotide exchange factors. mTORC2 promotes the serum-induced formation of stress-fibers or F-actin. MAPKAP1 inhibits MAP3K2 by preventing its dimerization and autophosphorylation. Inhibits HRAS and KRAS independently of mTORC2 complex. Enhances osmotic stress-induced phosphorylation of ATF2 and ATF2-mediated transcription. Involved in ciliogenesis, regulates cilia length through its interaction with CCDC28B independently of mTORC2 complex. This is Target of rapamycin complex 2 subunit MAPKAP1 (MAPKAP1) from Bos taurus (Bovine).